The following is a 771-amino-acid chain: MSNLRLRLLSLVSILYCIAALRCRPDQTETIKRFKNEFAFSSICRNDTNFFSGVVCDNTTGAVTVLELPGGCLRGTLRPNSSLFELSHLRYLNLSFNNFDSSPLSSAFGQLNNLEVLLLSSNGFTGQVPSSIRNLTKLTQLNLPHNKLTGDLPSLVQNLTKLLALDLSYNQFSGTIPSSFFTMPFLSYLDLSENHLTGSFEISNSSSKLENLNLGNNHFETEIIDPVLRLVNLRYLSLSFLNTSHPIDLSIFSPLQSLTHLDLHGNSLTLTSVYSDIDFPKNMEILLLSGCNISEFPRFLKSLKKLWYLDLSSNRIKGNVPDWIWSLPLLVSLDLSNNSFTGFNGSLDHVLANSSVQVLDIALNSFKGSFPNPPVSIINLSAWNNSFTGDIPLSVCNRTSLDVLDLSYNNFTGSIPPCMGNFTIVNLRKNKLEGNIPDEFYSGALTQTLDVGYNQLTGELPRSLLNCSFIRFLSVDHNRINDSFPLWLKALPNLKVLTLRSNSFHGPMSPPDDQSSLAFPKLQILEISHNRFTGSLPTNYFANWSVKSLKMYDEERLYMGDYSSDRFVYEDTLDLQYKGLYMEQGKVLTFYSAIDFSGNKLEGEIPESIGLLKTLIALNLSNNSFTGHIPMSFANVTELESLDLSGNKLSGEIPQELGRLSYLAYIDVSDNQLTGKIPQGTQIIGQPKSSFEGNSGLCGLPLEESCLREDAPSTQEPEEEEEEILEWRAAAIGYGPGVLFGLAIGHVVALYKPGWFIKNNGQNRLRGIRHP.

Positions 1 to 20 (MSNLRLRLLSLVSILYCIAA) are cleaved as a signal peptide. At 21-729 (LRCRPDQTET…EEEEILEWRA (709 aa)) the chain is on the extracellular side. 6 N-linked (GlcNAc...) asparagine glycosylation sites follow: asparagine 46, asparagine 58, asparagine 80, asparagine 93, asparagine 134, and asparagine 158. 12 LRR repeats span residues 86-110 (LSHL…AFGQ), 112-135 (NNLE…IRNL), 136-159 (TKLT…VQNL), 160-183 (TKLL…FFTM), 185-206 (FLSY…SNSS), 207-230 (SKLE…VLRL), 232-254 (NLRY…IFSP), 255-281 (LQSL…DFPK), 283-303 (MEIL…LKSL), 304-327 (KKLW…IWSL), 329-350 (LLVS…LDHV), and 353-377 (NSSV…PVSI). An N-linked (GlcNAc...) asparagine glycan is attached at asparagine 204. N-linked (GlcNAc...) asparagine glycosylation occurs at asparagine 242. N-linked (GlcNAc...) asparagine glycosylation is present at asparagine 292. 10 N-linked (GlcNAc...) asparagine glycosylation sites follow: asparagine 337, asparagine 344, asparagine 353, asparagine 379, asparagine 384, asparagine 397, asparagine 410, asparagine 421, asparagine 466, and asparagine 481. One copy of the LRR 13; degenerate repeat lies at 378–397 (INLSAWNNSFTGDIPLSVCN). LRR repeat units lie at residues 398-419 (RTSL…PPCM), 420-443 (GNFT…FYSG), 445-467 (LTQT…LLNC), 469-491 (FIRF…LKAL), 492-516 (PNLK…DQSS), 519-543 (FPKL…YFAN), 588-612 (LTFY…IGLL), 613-636 (KTLI…FANV), 637-660 (TELE…LGRL), and 662-685 (YLAY…QIIG). Asparagine 543 is a glycosylation site (N-linked (GlcNAc...) asparagine). 3 N-linked (GlcNAc...) asparagine glycosylation sites follow: asparagine 619, asparagine 622, and asparagine 635. Residues 730-750 (AAIGYGPGVLFGLAIGHVVAL) form a helical membrane-spanning segment. The Cytoplasmic segment spans residues 751–771 (YKPGWFIKNNGQNRLRGIRHP).

This sequence belongs to the RLP family.

The protein resides in the cell membrane. This chain is Receptor like protein 22, found in Arabidopsis thaliana (Mouse-ear cress).